The following is a 215-amino-acid chain: UPF0319 protein VV2_0960 (215 aa).

Residues 1-21 (MNIIKPLTCILAMSISGLATA) form the signal peptide.

The protein belongs to the UPF0319 family.

This chain is UPF0319 protein VV2_0960, found in Vibrio vulnificus (strain CMCP6).